We begin with the raw amino-acid sequence, 72 residues long: UPF0352 protein CGSHiGG_07710 (72 aa).

Belongs to the UPF0352 family.

In Haemophilus influenzae (strain PittGG), this protein is UPF0352 protein CGSHiGG_07710.